The primary structure comprises 421 residues: UDP-N-acetylglucosamine 1-carboxyvinyltransferase (421 aa).

22-23 (KN) is a phosphoenolpyruvate binding site. UDP-N-acetyl-alpha-D-glucosamine is bound at residue Arg-93. Cys-117 acts as the Proton donor in catalysis. A 2-(S-cysteinyl)pyruvic acid O-phosphothioketal modification is found at Cys-117. UDP-N-acetyl-alpha-D-glucosamine contacts are provided by residues 122–126 (RPVDL), Asp-308, and Ile-330.

It belongs to the EPSP synthase family. MurA subfamily.

The protein localises to the cytoplasm. The enzyme catalyses phosphoenolpyruvate + UDP-N-acetyl-alpha-D-glucosamine = UDP-N-acetyl-3-O-(1-carboxyvinyl)-alpha-D-glucosamine + phosphate. Its pathway is cell wall biogenesis; peptidoglycan biosynthesis. Cell wall formation. Adds enolpyruvyl to UDP-N-acetylglucosamine. This is UDP-N-acetylglucosamine 1-carboxyvinyltransferase from Pseudomonas fluorescens (strain ATCC BAA-477 / NRRL B-23932 / Pf-5).